The chain runs to 412 residues: Tyrosine--tRNA ligase (412 aa).

Residue tyrosine 31 coordinates L-tyrosine. The 'HIGH' region motif lies at 36–45 (PTAPSLHIGH). Tyrosine 162 and glutamine 166 together coordinate L-tyrosine. A 'KMSKS' region motif is present at residues 222-226 (KIGKT). Residue lysine 225 participates in ATP binding. Residues 345–411 (KRWLDIVVEL…GKRKKQVIDL (67 aa)) enclose the S4 RNA-binding domain.

It belongs to the class-I aminoacyl-tRNA synthetase family. TyrS type 1 subfamily. Homodimer.

The protein localises to the cytoplasm. The catalysed reaction is tRNA(Tyr) + L-tyrosine + ATP = L-tyrosyl-tRNA(Tyr) + AMP + diphosphate + H(+). Its function is as follows. Catalyzes the attachment of tyrosine to tRNA(Tyr) in a two-step reaction: tyrosine is first activated by ATP to form Tyr-AMP and then transferred to the acceptor end of tRNA(Tyr). The sequence is that of Tyrosine--tRNA ligase from Chlamydia trachomatis serovar L2 (strain ATCC VR-902B / DSM 19102 / 434/Bu).